Reading from the N-terminus, the 327-residue chain is G-protein coupled receptor 55 (327 aa).

The Extracellular segment spans residues methionine 1–threonine 20. Asparagine 8 is a glycosylation site (N-linked (GlcNAc...) asparagine). A helical membrane pass occupies residues leucine 21–isoleucine 41. The Cytoplasmic segment spans residues arginine 42–alanine 57. A helical membrane pass occupies residues threonine 58–phenylalanine 78. Over lysine 79–cysteine 93 the chain is Extracellular. A helical transmembrane segment spans residues threonine 94–isoleucine 114. The Cytoplasmic segment spans residues serine 115–lysine 136. The chain crosses the membrane as a helical span at residues threonine 137 to threonine 157. At phenylalanine 158–serine 179 the chain is on the extracellular side. Asparagine 170 is a glycosylation site (N-linked (GlcNAc...) asparagine). The helical transmembrane segment at valine 180–serine 200 threads the bilayer. Residues tyrosine 201–asparagine 239 lie on the Cytoplasmic side of the membrane. The helical transmembrane segment at leucine 240–valine 260 threads the bilayer. The Extracellular segment spans residues arginine 261–glutamine 279. The chain crosses the membrane as a helical span at residues leucine 280–isoleucine 300. The Cytoplasmic portion of the chain corresponds to lysine 301–glycine 327.

This sequence belongs to the G-protein coupled receptor 1 family. Highly expressed in splenic plasma cells.

Its subcellular location is the cell membrane. G-protein coupled receptor that binds to several ligands including 2-arachidonoyl lysophosphatidylinositol or lysophosphatidylglucoside with high affinity, leading to rapid and transient activation of numerous intracellular signaling pathways. Induces the Ca(2+) release from intracellular stores via ERK, the heterotrimeric G protein GNA13 and RHOA leading to morphological changes including cell rounding and stress fiber formation. In macrophages, acts downstream of lysophosphatidylglucoside to inhibit the translocation of the phospholipid-transporting ABCA1 to plasma membrane and subsequent cholesterol efflux leading to lipid accumulation and foam cell formation. May be involved in hyperalgesia associated with inflammatory and neuropathic pain. This chain is G-protein coupled receptor 55 (Gpr55), found in Mus musculus (Mouse).